A 208-amino-acid polypeptide reads, in one-letter code: Glutathione S-transferase F6 (208 aa).

The GST N-terminal domain occupies 2 to 83 (AGIKVFGHPA…YIAHEFSDKG (82 aa)). Glutathione is bound by residues 12-13 (ST), 41-42 (HK), 54-55 (KV), and 67-68 (ES). Positions 89–208 (TGKDMAIIAM…TSRPSAQKVL (120 aa)) constitute a GST C-terminal domain.

The protein belongs to the GST superfamily. Phi family.

It localises to the cytoplasm. Its subcellular location is the cytosol. It catalyses the reaction RX + glutathione = an S-substituted glutathione + a halide anion + H(+). In terms of biological role, involved in camalexin biosynthesis by probably catalyzing the conjugation of GSH with indole-3-acetonitrile (IAN). May be involved in the conjugation of reduced glutathione to a wide number of exogenous and endogenous hydrophobic electrophiles and have a detoxification role against certain herbicides. This is Glutathione S-transferase F6 (GSTF6) from Arabidopsis thaliana (Mouse-ear cress).